The primary structure comprises 305 residues: Ribosomal RNA small subunit methyltransferase H (305 aa).

S-adenosyl-L-methionine-binding positions include 37–39 (GGH), aspartate 57, phenylalanine 85, aspartate 101, and histidine 108.

This sequence belongs to the methyltransferase superfamily. RsmH family.

Its subcellular location is the cytoplasm. The enzyme catalyses cytidine(1402) in 16S rRNA + S-adenosyl-L-methionine = N(4)-methylcytidine(1402) in 16S rRNA + S-adenosyl-L-homocysteine + H(+). Its function is as follows. Specifically methylates the N4 position of cytidine in position 1402 (C1402) of 16S rRNA. This is Ribosomal RNA small subunit methyltransferase H from Parabacteroides distasonis (strain ATCC 8503 / DSM 20701 / CIP 104284 / JCM 5825 / NCTC 11152).